Reading from the N-terminus, the 244-residue chain is tRNA (guanine-N(1)-)-methyltransferase (244 aa).

Residues glycine 111 and 130–135 (IGDYVL) each bind S-adenosyl-L-methionine.

This sequence belongs to the RNA methyltransferase TrmD family. As to quaternary structure, homodimer.

It is found in the cytoplasm. The enzyme catalyses guanosine(37) in tRNA + S-adenosyl-L-methionine = N(1)-methylguanosine(37) in tRNA + S-adenosyl-L-homocysteine + H(+). Functionally, specifically methylates guanosine-37 in various tRNAs. This Phytoplasma australiense protein is tRNA (guanine-N(1)-)-methyltransferase.